An 842-amino-acid polypeptide reads, in one-letter code: Serine/threonine-protein kinase CLA4 (842 aa).

Residues 12 to 34 (DNDFQNIGPAPRPPSSNSQGRTC) are disordered. 2 positions are modified to phosphoserine: S29 and S46. The PH domain occupies 61–179 (SKKKSGWVSY…WLDAIFAKCP (119 aa)). A CRIB domain is found at 184–197 (VSSPTNFTHKVHVG). Over residues 247–274 (GNPTNTLDKPQSGETSSSQKSLPNSYND) the composition is skewed to polar residues. Positions 247-524 (GNPTNTLDKP…KPKKPARPTM (278 aa)) are disordered. Low complexity predominate over residues 279–296 (NNSVNSKSSSGVSSSMVS). A compositionally biased stretch (polar residues) spans 297 to 307 (QRKTSQPPNTK). The span at 308–319 (SPVSLGSGSLPP) shows a compositional bias: low complexity. The segment covering 323–343 (KLPTSQSNIPRHLQNVPNQQY) has biased composition (polar residues). Phosphoserine is present on residues S351 and S367. Positions 372 to 387 (QQQQQQQQQQKQQHQQ) are enriched in low complexity. Over residues 396–408 (SPSPSPSPSPLNP) the composition is skewed to pro residues. Residues 418-435 (PYSKQPQSPLSSQSTQNQ) are compositionally biased toward low complexity. At S425 the chain carries Phosphoserine. Composition is skewed to polar residues over residues 470–481 (PSNQNATSNTHV) and 488–497 (NDQSTPQTMR). In terms of domain architecture, Protein kinase spans 546–825 (FKVIEKAGQG…TEELLHHGFF (280 aa)). Residues 552–560 (AGQGASGSV) and K594 contribute to the ATP site. Residue D693 is the Proton acceptor of the active site.

It belongs to the protein kinase superfamily. STE Ser/Thr protein kinase family. STE20 subfamily. Interacts with CDC42.

The enzyme catalyses L-seryl-[protein] + ATP = O-phospho-L-seryl-[protein] + ADP + H(+). It carries out the reaction L-threonyl-[protein] + ATP = O-phospho-L-threonyl-[protein] + ADP + H(+). Its function is as follows. Involved in budding and cytokinesis. This is Serine/threonine-protein kinase CLA4 (CLA4) from Saccharomyces cerevisiae (strain ATCC 204508 / S288c) (Baker's yeast).